A 260-amino-acid polypeptide reads, in one-letter code: Thrombin-like enzyme bhalternin (260 aa).

A signal peptide spans 1 to 18 (MVLIRVLANLLILQLSYA). A propeptide spanning residues 19 to 24 (QKASEL) is cleaved from the precursor. One can recognise a Peptidase S1 domain in the interval 25–251 (VIGGDECNIN…YSEWIQSIIA (227 aa)). Cystine bridges form between C31–C165, C50–C66, C144–C212, C176–C191, and C202–C227. N-linked (GlcNAc...) asparagine glycosylation occurs at N44. N-linked (GlcNAc...) asparagine glycosylation occurs at N81.

The protein belongs to the peptidase S1 family. Snake venom subfamily. Monomer. Expressed by the venom gland.

It is found in the secreted. Its activity is regulated as follows. Inhibited by benzamidine and partially inhibited by EDTA. Thrombin-like snake venom serine protease that induces blood clotting in vitro, defibrinogenation in vivo (by intraperitoneal injection into mice), albuminolytic and fibrinogenolytic activities. Preferentially cleaves the alpha chain of fibrinogen (FGA). Causes hemolysis in the heart, causes apparent hyperemia and lymphocytic interstitial pneumonitis in the lung, causes necrosis and inflammatory infiltrate in the liver, and causes glomerular congestion in the kidney. Also provokes a drastic myonecrosis. The protein is Thrombin-like enzyme bhalternin of Bothrops alternatus (Urutu).